We begin with the raw amino-acid sequence, 545 residues long: MSILSLVEDRPTPKEVYNWRIYLLAAVASFTSCMIGYDSAFIGTTISLQSFKDEFNWDAMSTDKQNLISANIVSLYQAGAFFGAFFAYPMGHFWGRRWGLFVAALVFTLGAGLMLGANGDRGLGLIYGGRVLAGLGVGAGSNITPIYISELAPPAIRGRLVGVYELGWQIGGLVGFWICFGVDDTLAPSHKQWIIPFAVQLIPSGLLLLGILFVRESPRWLFLRGRREQAIQNLCWIRQLPVDHIYMIEEIGAIDQSLEQQRSTIGLGFTKPFLAVWSNKRIMYRLFLGSMLFLWQNGSGINAINYYSPTVFKSIGLRGANTSLLTTGIFGVVKTVVTFVWLLWLIDRLGRRLLLMIGAAGGSVCLWIVGAYIKVAKPTERDPDAPLDGGGIAAMFFFYLWTVFYTPSWNGTPWVMNSEMFDPNVRSLAQACAAGSNWLWNFLISRFTPQMFAKMEYGVYFFFASLMILSIVFVFFLIPETKGIPLESMDGLFEYKPIWRAHAKVLAQLREDEERFRTDIEESGYTKSDAQQVERVEQAESVPKA.

Over 1-22 the chain is Cytoplasmic; the sequence is MSILSLVEDRPTPKEVYNWRIY. A helical transmembrane segment spans residues 23 to 43; the sequence is LLAAVASFTSCMIGYDSAFIG. At 44–66 the chain is on the extracellular side; that stretch reads TTISLQSFKDEFNWDAMSTDKQN. A helical transmembrane segment spans residues 67–87; that stretch reads LISANIVSLYQAGAFFGAFFA. Over 88 to 97 the chain is Cytoplasmic; it reads YPMGHFWGRR. Residues 98–118 traverse the membrane as a helical segment; the sequence is WGLFVAALVFTLGAGLMLGAN. Residues 119–130 lie on the Extracellular side of the membrane; sequence GDRGLGLIYGGR. Residues 131-151 form a helical membrane-spanning segment; the sequence is VLAGLGVGAGSNITPIYISEL. The Cytoplasmic portion of the chain corresponds to 152-159; it reads APPAIRGR. The chain crosses the membrane as a helical span at residues 160–180; it reads LVGVYELGWQIGGLVGFWICF. At 181 to 193 the chain is on the extracellular side; that stretch reads GVDDTLAPSHKQW. A helical transmembrane segment spans residues 194–214; that stretch reads IIPFAVQLIPSGLLLLGILFV. Residues 215–285 lie on the Cytoplasmic side of the membrane; the sequence is RESPRWLFLR…VWSNKRIMYR (71 aa). Residues 286–306 form a helical membrane-spanning segment; it reads LFLGSMLFLWQNGSGINAINY. The Extracellular segment spans residues 307 to 325; sequence YSPTVFKSIGLRGANTSLL. Residues 326–346 traverse the membrane as a helical segment; sequence TTGIFGVVKTVVTFVWLLWLI. Topologically, residues 347 to 352 are cytoplasmic; the sequence is DRLGRR. A helical membrane pass occupies residues 353–373; it reads LLLMIGAAGGSVCLWIVGAYI. Residues 374–384 lie on the Extracellular side of the membrane; that stretch reads KVAKPTERDPD. The chain crosses the membrane as a helical span at residues 385–405; it reads APLDGGGIAAMFFFYLWTVFY. Topologically, residues 406–457 are cytoplasmic; the sequence is TPSWNGTPWVMNSEMFDPNVRSLAQACAAGSNWLWNFLISRFTPQMFAKMEY. Residues 458–478 form a helical membrane-spanning segment; it reads GVYFFFASLMILSIVFVFFLI. Residues 479–545 are Extracellular-facing; sequence PETKGIPLES…VEQAESVPKA (67 aa). The interval 520–545 is disordered; sequence IEESGYTKSDAQQVERVEQAESVPKA.

The protein belongs to the major facilitator superfamily. Sugar transporter (TC 2.A.1.1) family. Interacts with creB. Ubiquitinated. Deubiquitinated by creB, probably to control its activity or amount.

The protein localises to the cell membrane. In terms of biological role, integral membrane transporter that imports quinic acid to be catabolized as a carbon source. The sequence is that of Probable quinate permease (qutD) from Aspergillus terreus (strain NIH 2624 / FGSC A1156).